Consider the following 258-residue polypeptide: tRNA pseudouridine synthase A (258 aa).

The Nucleophile role is filled by Asp-53. Tyr-111 lines the substrate pocket.

This sequence belongs to the tRNA pseudouridine synthase TruA family. Homodimer.

It carries out the reaction uridine(38/39/40) in tRNA = pseudouridine(38/39/40) in tRNA. Formation of pseudouridine at positions 38, 39 and 40 in the anticodon stem and loop of transfer RNAs. This chain is tRNA pseudouridine synthase A, found in Streptococcus agalactiae serotype V (strain ATCC BAA-611 / 2603 V/R).